The primary structure comprises 55 residues: MAKAATIKIKLLSSADTGVFYVTKKNSRTKTDKIVLKKYDPVVRKHVEFRETKIK.

Belongs to the bacterial ribosomal protein bL33 family.

This is Large ribosomal subunit protein bL33 from Xanthobacter autotrophicus (strain ATCC BAA-1158 / Py2).